Here is a 94-residue protein sequence, read N- to C-terminus: Neurotoxin LmNaTx45.2 (94 aa).

The signal sequence occupies residues methionine 1–serine 18. One can recognise an LCN-type CS-alpha/beta domain in the interval lysine 20 to aspartate 86. 4 cysteine pairs are disulfide-bonded: cysteine 34-cysteine 85, cysteine 44-cysteine 63, cysteine 48-cysteine 65, and cysteine 59-cysteine 85.

The protein belongs to the long (4 C-C) scorpion toxin superfamily. Sodium channel inhibitor family. Beta subfamily. As to expression, expressed by the venom gland.

The protein resides in the secreted. Binds voltage-independently at site-4 of sodium channels (Nav) and shift the voltage of activation toward more negative potentials thereby affecting sodium channel activation and promoting spontaneous and repetitive firing. In Lychas mucronatus (Chinese swimming scorpion), this protein is Neurotoxin LmNaTx45.2.